Here is a 236-residue protein sequence, read N- to C-terminus: Small ribosomal subunit protein uS2c (236 aa).

This sequence belongs to the universal ribosomal protein uS2 family.

The protein localises to the plastid. It is found in the chloroplast. In Citrus sinensis (Sweet orange), this protein is Small ribosomal subunit protein uS2c (rps2).